Reading from the N-terminus, the 290-residue chain is Formamidopyrimidine-DNA glycosylase (290 aa).

The active-site Schiff-base intermediate with DNA is the Pro2. The Proton donor role is filled by Glu3. Catalysis depends on Lys58, which acts as the Proton donor; for beta-elimination activity. DNA contacts are provided by His97, Arg122, and Lys165. Residues 250–290 (KVYGREGEPCPGCDCDPVRTGGIARIVQSGRSTFYCPRHQR) form an FPG-type; atypical zinc finger. The Proton donor; for delta-elimination activity role is filled by Arg280.

This sequence belongs to the FPG family. In terms of assembly, monomer. The cofactor is Zn(2+).

It catalyses the reaction Hydrolysis of DNA containing ring-opened 7-methylguanine residues, releasing 2,6-diamino-4-hydroxy-5-(N-methyl)formamidopyrimidine.. It carries out the reaction 2'-deoxyribonucleotide-(2'-deoxyribose 5'-phosphate)-2'-deoxyribonucleotide-DNA = a 3'-end 2'-deoxyribonucleotide-(2,3-dehydro-2,3-deoxyribose 5'-phosphate)-DNA + a 5'-end 5'-phospho-2'-deoxyribonucleoside-DNA + H(+). In terms of biological role, involved in base excision repair of DNA damaged by oxidation or by mutagenic agents. Acts as a DNA glycosylase that recognizes and removes damaged bases. Has a preference for oxidized purines, such as 7,8-dihydro-8-oxoguanine (8-oxoG). Has AP (apurinic/apyrimidinic) lyase activity and introduces nicks in the DNA strand. Cleaves the DNA backbone by beta-delta elimination to generate a single-strand break at the site of the removed base with both 3'- and 5'-phosphates. The chain is Formamidopyrimidine-DNA glycosylase from Rhodospirillum centenum (strain ATCC 51521 / SW).